The chain runs to 511 residues: Histidine ammonia-lyase (511 aa).

Positions 142 to 144 form a cross-link, 5-imidazolinone (Ala-Gly); it reads ASG. Ser-143 bears the 2,3-didehydroalanine (Ser) mark.

Belongs to the PAL/histidase family. Contains an active site 4-methylidene-imidazol-5-one (MIO), which is formed autocatalytically by cyclization and dehydration of residues Ala-Ser-Gly.

Its subcellular location is the cytoplasm. The catalysed reaction is L-histidine = trans-urocanate + NH4(+). Its pathway is amino-acid degradation; L-histidine degradation into L-glutamate; N-formimidoyl-L-glutamate from L-histidine: step 1/3. This Rhizobium rhizogenes (Agrobacterium rhizogenes) protein is Histidine ammonia-lyase.